The sequence spans 156 residues: Succinate dehydrogenase assembly factor 2-B, mitochondrial (156 aa).

The transit peptide at 1 to 24 (MLRQLIVSTVGRRMPLQMISQSRL) directs the protein to the mitochondrion.

It belongs to the SDHAF2 family. In terms of assembly, interacts with the flavoprotein subunit within the SDH catalytic dimer.

The protein resides in the mitochondrion matrix. Its function is as follows. Plays an essential role in the assembly of succinate dehydrogenase (SDH), an enzyme complex (also referred to as respiratory complex II) that is a component of both the tricarboxylic acid (TCA) cycle and the mitochondrial electron transport chain, and which couples the oxidation of succinate to fumarate with the reduction of ubiquinone (coenzyme Q) to ubiquinol. Required for flavinylation (covalent attachment of FAD) of the flavoprotein subunit of the SDH catalytic dimer. In Drosophila erecta (Fruit fly), this protein is Succinate dehydrogenase assembly factor 2-B, mitochondrial.